The following is a 714-amino-acid chain: ATP-dependent DNA helicase DinG (714 aa).

The 278-residue stretch at 17-294 (ALQDQIPDFI…TCMEQFRPKT (278 aa)) folds into the Helicase ATP-binding domain. 54-61 (APTGVGKT) is an ATP binding site. [4Fe-4S] cluster is bound by residues Cys-120, Cys-194, Cys-199, and Cys-205. A DEAH box motif is present at residues 248–251 (DEGH). The Helicase C-terminal domain maps to 517 to 698 (HIAEMAAYFR…VFPIEQPAVP (182 aa)).

This sequence belongs to the helicase family. DinG subfamily. Type 1 sub-subfamily. It depends on [4Fe-4S] cluster as a cofactor.

The enzyme catalyses Couples ATP hydrolysis with the unwinding of duplex DNA at the replication fork by translocating in the 5'-3' direction. This creates two antiparallel DNA single strands (ssDNA). The leading ssDNA polymer is the template for DNA polymerase III holoenzyme which synthesizes a continuous strand.. The catalysed reaction is ATP + H2O = ADP + phosphate + H(+). In terms of biological role, DNA-dependent ATPase and 5'-3' DNA helicase. Unwinds D-loops, R-loops, forked DNA and G-quadruplex DNA. The protein is ATP-dependent DNA helicase DinG of Salmonella typhimurium (strain LT2 / SGSC1412 / ATCC 700720).